The chain runs to 332 residues: L-lactate dehydrogenase A chain (332 aa).

Ala2 is subject to N-acetylalanine. Lys5 carries the post-translational modification N6-acetyllysine; alternate. An N6-succinyllysine; alternate modification is found at Lys5. Position 14 is an N6-acetyllysine (Lys14). 29-57 (GAVGMACAISILMKDLADEVALVDVMEDK) contacts NAD(+). Lys57 bears the N6-acetyllysine; alternate mark. Lys57 is covalently cross-linked (Glycyl lysine isopeptide (Lys-Gly) (interchain with G-Cter in SUMO2); alternate). Lys81 carries the post-translational modification N6-acetyllysine. Arg106 contributes to the substrate binding site. Lys118 carries the post-translational modification N6-acetyllysine; alternate. Position 118 is an N6-succinyllysine; alternate (Lys118). Lys126 carries the post-translational modification N6-acetyllysine. NAD(+) is bound at residue Asn138. Asn138 and Arg169 together coordinate substrate. The Proton acceptor role is filled by His193. Lys224 and Lys232 each carry N6-acetyllysine. Residue Tyr239 is modified to Phosphotyrosine. Position 243 is an N6-acetyllysine (Lys243). Thr248 lines the substrate pocket. Thr309 is subject to Phosphothreonine. The residue at position 318 (Lys318) is an N6-acetyllysine; alternate. Lys318 is subject to N6-succinyllysine; alternate. At Thr322 the chain carries Phosphothreonine.

Belongs to the LDH/MDH superfamily. LDH family. In terms of assembly, homotetramer. Interacts with PTEN upstream reading frame protein MP31. Post-translationally, ISGylated.

It localises to the cytoplasm. The enzyme catalyses (S)-lactate + NAD(+) = pyruvate + NADH + H(+). The protein operates within fermentation; pyruvate fermentation to lactate; (S)-lactate from pyruvate: step 1/1. Its function is as follows. Interconverts simultaneously and stereospecifically pyruvate and lactate with concomitant interconversion of NADH and NAD(+). This Bos mutus grunniens (Wild yak) protein is L-lactate dehydrogenase A chain (LDHA).